The sequence spans 438 residues: Transcriptional regulator Mb0495 (438 aa).

Over residues 1–12 (MYSTNRTSQSLS) the composition is skewed to polar residues. The segment at 1–22 (MYSTNRTSQSLSRKPGRKHQLR) is disordered. Positions 52 to 73 (VGRDVIAGSTSLSIATVNRQVI) form a DNA-binding region, H-T-H motif.

The protein belongs to the ROK (NagC/XylR) family.

In terms of biological role, positively regulates the expression of PE13 and PPE18. The protein is Transcriptional regulator Mb0495 of Mycobacterium bovis (strain ATCC BAA-935 / AF2122/97).